Reading from the N-terminus, the 137-residue chain is ATP synthase epsilon chain (137 aa).

The protein belongs to the ATPase epsilon chain family. As to quaternary structure, F-type ATPases have 2 components, CF(1) - the catalytic core - and CF(0) - the membrane proton channel. CF(1) has five subunits: alpha(3), beta(3), gamma(1), delta(1), epsilon(1). CF(0) has three main subunits: a, b and c.

It is found in the cell inner membrane. Functionally, produces ATP from ADP in the presence of a proton gradient across the membrane. This chain is ATP synthase epsilon chain, found in Pseudoalteromonas atlantica (strain T6c / ATCC BAA-1087).